Reading from the N-terminus, the 64-residue chain is Cecropin-A (64 aa).

Residues 1-22 form the signal peptide; it reads MNFSRIFFFVFACLTALAMVNA. Residues 23-26 constitute a propeptide, removed by a dipeptidylpeptidase; it reads APEP. The residue at position 63 (lysine 63) is a Lysine amide.

The protein belongs to the cecropin family. Post-translationally, a protein with the same sequence as cecropin A, but lacking the carboxyl blocking group, has been isolated and called cecropin C.

Its subcellular location is the secreted. Functionally, cecropins have lytic and antibacterial activity against several Gram-positive and Gram-negative bacteria. The sequence is that of Cecropin-A from Hyalophora cecropia (Cecropia moth).